The primary structure comprises 359 residues: Fructose-bisphosphate aldolase (359 aa).

Serine 62 serves as a coordination point for D-glyceraldehyde 3-phosphate. Aspartate 110 acts as the Proton donor in catalysis. Residues histidine 111, aspartate 145, glutamate 175, and histidine 227 each coordinate Zn(2+). Glycine 228 contributes to the dihydroxyacetone phosphate binding site. Histidine 265 serves as a coordination point for Zn(2+). Dihydroxyacetone phosphate-binding positions include 266–268 (GGS) and 287–290 (NIDT).

This sequence belongs to the class II fructose-bisphosphate aldolase family. As to quaternary structure, homodimer. The cofactor is Zn(2+).

It carries out the reaction beta-D-fructose 1,6-bisphosphate = D-glyceraldehyde 3-phosphate + dihydroxyacetone phosphate. It participates in carbohydrate degradation; glycolysis; D-glyceraldehyde 3-phosphate and glycerone phosphate from D-glucose: step 4/4. Its function is as follows. Catalyzes the aldol condensation of dihydroxyacetone phosphate (DHAP or glycerone-phosphate) with glyceraldehyde 3-phosphate (G3P) to form fructose 1,6-bisphosphate (FBP) in gluconeogenesis and the reverse reaction in glycolysis. In Haemophilus influenzae (strain ATCC 51907 / DSM 11121 / KW20 / Rd), this protein is Fructose-bisphosphate aldolase (fba).